Here is a 295-residue protein sequence, read N- to C-terminus: MELLSALSLDDLAVAFSKLPVFPLFDVAYYIISILYLKYEPGAVDLSKRSPVASWLCAMLYCFGSYILADVLLGESPIHYFSNNANILLASAVWYLTFFCPLNIFYKIVSFLPLKLVLVGMKEVVRVRKIAMGIHHAHHHYHHGWVIMVLIGWVKGSGVALMSNLEQLLRGVWKPETNEILHMSFPTKASLYGAILFTLQQAHWLPISKAYLIFFFTLFMAICKIYMTATHSHGSPFAIFESGICCVLFGAANGDHDDHGDHHHHHDDHDVSHSTVKSKEELNEGTRKRKTKKAE.

The Lumenal segment spans residues 1–11 (MELLSALSLDD). A helical transmembrane segment spans residues 12–32 (LAVAFSKLPVFPLFDVAYYII). The Cytoplasmic portion of the chain corresponds to 33–51 (SILYLKYEPGAVDLSKRSP). The helical transmembrane segment at 52-72 (VASWLCAMLYCFGSYILADVL) threads the bilayer. Over 73 to 84 (LGESPIHYFSNN) the chain is Lumenal. Glycine 74 is a binding site for Ca(2+). The helical transmembrane segment at 85–105 (ANILLASAVWYLTFFCPLNIF) threads the bilayer. The Cytoplasmic segment spans residues 106–144 (YKIVSFLPLKLVLVGMKEVVRVRKIAMGIHHAHHHYHHG). Residues lysine 122 and arginine 126 each contribute to the a 1,2-diacyl-sn-glycero-3-phospho-(1D-myo-inositol-4,5-bisphosphate) site. A helical transmembrane segment spans residues 145 to 165 (WVIMVLIGWVKGSGVALMSNL). Over 166 to 178 (EQLLRGVWKPETN) the chain is Lumenal. The helical transmembrane segment at 179–199 (EILHMSFPTKASLYGAILFTL) threads the bilayer. Over 200 to 201 (QQ) the chain is Cytoplasmic. Residues 202–222 (AHWLPISKAYLIFFFTLFMAI) form a helical membrane-spanning segment. Over 223–233 (CKIYMTATHSH) the chain is Lumenal. Residues 234-254 (GSPFAIFESGICCVLFGAANG) form a helical membrane-spanning segment. Residues 255-295 (DHDDHGDHHHHHDDHDVSHSTVKSKEELNEGTRKRKTKKAE) are Cytoplasmic-facing. Residues 259–286 (HGDHHHHHDDHDVSHSTVKSKEELNEGT) show a composition bias toward basic and acidic residues. Residues 259–295 (HGDHHHHHDDHDVSHSTVKSKEELNEGTRKRKTKKAE) form a disordered region.

It belongs to the TMEM38 family. As to quaternary structure, homotrimer; conformation seems to be controled by binding to diacylglycerol (DAG).

Its subcellular location is the sarcoplasmic reticulum membrane. It localises to the nucleus membrane. It carries out the reaction K(+)(in) = K(+)(out). Its activity is regulated as follows. Channel activity is activated by a change of voltage within the sarcoplasmic reticulum lumen and blocked by luminal high Ca(2+) levels. In terms of biological role, intracellular monovalent cation channel required for maintenance of rapid intracellular calcium release. Acts as a potassium counter-ion channel that functions in synchronization with calcium release from intracellular stores. Opened by a change of voltage within the sarcoplasmic reticulum lumen. In Xenopus tropicalis (Western clawed frog), this protein is Trimeric intracellular cation channel type A (tmem38a).